The sequence spans 267 residues: Undecaprenyl-diphosphatase (267 aa).

8 helical membrane-spanning segments follow: residues methionine 1 to isoleucine 21, glutamine 39 to phenylalanine 59, tryptophan 87 to isoleucine 107, leucine 111 to valine 131, alanine 149 to isoleucine 169, phenylalanine 189 to leucine 209, phenylalanine 218 to leucine 238, and methionine 246 to leucine 266.

The protein belongs to the UppP family.

The protein resides in the cell inner membrane. The enzyme catalyses di-trans,octa-cis-undecaprenyl diphosphate + H2O = di-trans,octa-cis-undecaprenyl phosphate + phosphate + H(+). In terms of biological role, catalyzes the dephosphorylation of undecaprenyl diphosphate (UPP). Confers resistance to bacitracin. In Aliivibrio salmonicida (strain LFI1238) (Vibrio salmonicida (strain LFI1238)), this protein is Undecaprenyl-diphosphatase.